The sequence spans 373 residues: Chaperone protein DnaJ (373 aa).

The region spanning 4-69 (DYYETLSVER…SKRRIYDTYG (66 aa)) is the J domain. The CR-type zinc-finger motif lies at 131–209 (GVSKEVKLSR…CHGEGLVKKT (79 aa)). Zn(2+) is bound by residues cysteine 144, cysteine 147, cysteine 161, cysteine 164, cysteine 183, cysteine 186, cysteine 197, and cysteine 200. CXXCXGXG motif repeat units follow at residues 144 to 151 (CWTCEGTG), 161 to 168 (CPTCNGRG), 183 to 190 (CPECEGEG), and 197 to 204 (CNDCHGEG).

Belongs to the DnaJ family. In terms of assembly, homodimer. Zn(2+) serves as cofactor.

It localises to the cytoplasm. In terms of biological role, participates actively in the response to hyperosmotic and heat shock by preventing the aggregation of stress-denatured proteins and by disaggregating proteins, also in an autonomous, DnaK-independent fashion. Unfolded proteins bind initially to DnaJ; upon interaction with the DnaJ-bound protein, DnaK hydrolyzes its bound ATP, resulting in the formation of a stable complex. GrpE releases ADP from DnaK; ATP binding to DnaK triggers the release of the substrate protein, thus completing the reaction cycle. Several rounds of ATP-dependent interactions between DnaJ, DnaK and GrpE are required for fully efficient folding. Also involved, together with DnaK and GrpE, in the DNA replication of plasmids through activation of initiation proteins. This is Chaperone protein DnaJ from Desulfotalea psychrophila (strain LSv54 / DSM 12343).